The primary structure comprises 287 residues: Ribonuclease Z (287 aa).

Zn(2+)-binding residues include His64, His66, Asp68, His69, His124, Asp191, and His250. The active-site Proton acceptor is the Asp68.

It belongs to the RNase Z family. In terms of assembly, homodimer. Zn(2+) serves as cofactor.

The catalysed reaction is Endonucleolytic cleavage of RNA, removing extra 3' nucleotides from tRNA precursor, generating 3' termini of tRNAs. A 3'-hydroxy group is left at the tRNA terminus and a 5'-phosphoryl group is left at the trailer molecule.. Its function is as follows. Zinc phosphodiesterase, which displays some tRNA 3'-processing endonuclease activity. Probably involved in tRNA maturation, by removing a 3'-trailer from precursor tRNA. This chain is Ribonuclease Z, found in Pyrobaculum calidifontis (strain DSM 21063 / JCM 11548 / VA1).